The chain runs to 381 residues: Chaperone protein DnaJ (381 aa).

The J domain occupies 5–70 (DYYEVLGIER…EKRSAYDQFG (66 aa)). A CR-type zinc finger spans residues 137 to 215 (GTTVDIRVPR…CHGEGRVRET (79 aa)). C150, C153, C167, C170, C189, C192, C203, and C206 together coordinate Zn(2+). CXXCXGXG motif repeat units lie at residues 150–157 (CEHCDGDG), 167–174 (CPTCHGQG), 189–196 (CPTCHGAG), and 203–210 (CRKCHGEG).

It belongs to the DnaJ family. As to quaternary structure, homodimer. Requires Zn(2+) as cofactor.

The protein localises to the cytoplasm. Participates actively in the response to hyperosmotic and heat shock by preventing the aggregation of stress-denatured proteins and by disaggregating proteins, also in an autonomous, DnaK-independent fashion. Unfolded proteins bind initially to DnaJ; upon interaction with the DnaJ-bound protein, DnaK hydrolyzes its bound ATP, resulting in the formation of a stable complex. GrpE releases ADP from DnaK; ATP binding to DnaK triggers the release of the substrate protein, thus completing the reaction cycle. Several rounds of ATP-dependent interactions between DnaJ, DnaK and GrpE are required for fully efficient folding. Also involved, together with DnaK and GrpE, in the DNA replication of plasmids through activation of initiation proteins. This is Chaperone protein DnaJ from Chromohalobacter salexigens (strain ATCC BAA-138 / DSM 3043 / CIP 106854 / NCIMB 13768 / 1H11).